A 134-amino-acid polypeptide reads, in one-letter code: Small ribosomal subunit protein bS6 (134 aa).

The tract at residues 99 to 134 (EPSAMMQKRDRDERKDRERGRRRDDDGYVGERNEEG) is disordered. Positions 105 to 134 (QKRDRDERKDRERGRRRDDDGYVGERNEEG) are enriched in basic and acidic residues.

This sequence belongs to the bacterial ribosomal protein bS6 family.

Functionally, binds together with bS18 to 16S ribosomal RNA. This chain is Small ribosomal subunit protein bS6, found in Methylobacterium sp. (strain 4-46).